We begin with the raw amino-acid sequence, 765 residues long: Polyribonucleotide nucleotidyltransferase (765 aa).

2 residues coordinate Mg(2+): aspartate 556 and aspartate 562. The KH domain occupies 622-681; sequence PRITKISIPQNKIGEVIGPKGKTINQITEETGANISIEDDGTVFVSAVGGEAAEAAIEKI. The region spanning 693 to 762 is the S1 motif domain; it reads GDRFLGTVVK…NRGKISLVPV (70 aa).

This sequence belongs to the polyribonucleotide nucleotidyltransferase family. Mg(2+) is required as a cofactor.

The protein resides in the cytoplasm. The enzyme catalyses RNA(n+1) + phosphate = RNA(n) + a ribonucleoside 5'-diphosphate. Its function is as follows. Involved in mRNA degradation. Catalyzes the phosphorolysis of single-stranded polyribonucleotides processively in the 3'- to 5'-direction. This chain is Polyribonucleotide nucleotidyltransferase, found in Corynebacterium urealyticum (strain ATCC 43042 / DSM 7109).